A 448-amino-acid chain; its full sequence is Probable D-serine dehydratase (448 aa).

N6-(pyridoxal phosphate)lysine is present on Lys117.

The protein belongs to the serine/threonine dehydratase family. DsdA subfamily. The cofactor is pyridoxal 5'-phosphate.

It catalyses the reaction D-serine = pyruvate + NH4(+). In Bacillus subtilis (strain 168), this protein is Probable D-serine dehydratase (dsdA).